The following is a 91-amino-acid chain: Probable Fe(2+)-trafficking protein (91 aa).

This sequence belongs to the Fe(2+)-trafficking protein family.

Functionally, could be a mediator in iron transactions between iron acquisition and iron-requiring processes, such as synthesis and/or repair of Fe-S clusters in biosynthetic enzymes. This is Probable Fe(2+)-trafficking protein from Thiobacillus denitrificans (strain ATCC 25259 / T1).